A 692-amino-acid polypeptide reads, in one-letter code: MLHSQIKSDIKQCYENLGNQLDNFIPRRAQNYLVAEIAKTLAGEYHQKHRMLVGEAGTGIGKSLAYLLGGIPFALFNNKKLLISTATVALQEQLINKDLPLFNRIYPKEFSFILAKGRQRYCCNHKLEACCATNNDQQVTLWEEKPKKSDLDLLRRMLKATRDGKWDGDRDSWPTTIPDRVWPQIMADKHSCHAGLPQHRSCPFAKAREHLDKADVIIANHALLMADIELGGGVILPEPEQTIYVIDEAHHLPKVARDFSSAASSLKGAATWLEKLNQTIGKLAELAEYKKAARFQDAILENIQHLIPTLRQVANNVDVGMFSKDGIYRFEHGELPAWLEQEAKGCKDASKKALQSLGKIHDLISERLKDNEIQQRLGEQALAESGVYLQRLENLEKVWALMAQPKKDKGAPLARWIEKNPDNEGDYIIQVSPLEVGYRLDQLLWSRAAGAILVSATLRALNQFTYFCRQVGIYEMDSTRFLALASPFDYQNNARLVIPALSLEPQADKFTDLLIKTLPEYLEGETASLVLFSSYWQMNKVADELRPLAKKNKWELLVQGEESRHITLKKHKDNCKSGKPSILFGTGSFSEGLDLPGDLLKNLIITKIPFGVPTSPVEEAHAEYIESCGGNPFMQISVPEASKKLIQSVGRLIRKEDDMGRVVLLDRRIINRRYGKALLDSLPPFKRVIEYS.

In terms of domain architecture, Helicase ATP-binding spans 16–293 (NLGNQLDNFI…AELAEYKKAA (278 aa)). 56 to 63 (AGTGIGKS) provides a ligand contact to ATP. C123 is a binding site for [4Fe-4S] cluster. Positions 134 to 137 (NNDQ) match the DEAH box motif. Residues C192 and C202 each coordinate [4Fe-4S] cluster. Residues 247-250 (DEAH) carry the DEAH box motif. The region spanning 514 to 692 (LIKTLPEYLE…PPFKRVIEYS (179 aa)) is the Helicase C-terminal domain.

Belongs to the helicase family. DinG subfamily. Type 1 sub-subfamily. Requires [4Fe-4S] cluster as cofactor.

The enzyme catalyses Couples ATP hydrolysis with the unwinding of duplex DNA at the replication fork by translocating in the 5'-3' direction. This creates two antiparallel DNA single strands (ssDNA). The leading ssDNA polymer is the template for DNA polymerase III holoenzyme which synthesizes a continuous strand.. It catalyses the reaction ATP + H2O = ADP + phosphate + H(+). DNA-dependent ATPase and 5'-3' DNA helicase. Unwinds D-loops, R-loops, forked DNA and G-quadruplex DNA. The polypeptide is ATP-dependent DNA helicase DinG (Photobacterium profundum (strain SS9)).